Reading from the N-terminus, the 622-residue chain is Fanconi anemia group G protein (622 aa).

Ser7 is subject to Phosphoserine. 4 TPR repeats span residues 246–279, 344–377, 453–486, and 514–547; these read VQVY…GSAW, SQTK…LLDS, SATH…LFRA, and AAAL…CPGN.

As to quaternary structure, belongs to the multisubunit FA complex composed of FANCA, FANCB, FANCC, FANCE, FANCF, FANCG, FANCL/PHF9 and FANCM. The complex is not found in FA patients. In complex with FANCF, FANCA and FANCL, but not with FANCC, nor FANCE, interacts with HES1; this interaction may be essential for the stability and nuclear localization of FA core complex proteins. The complex with FANCC and FANCG may also include EIF2AK2 and HSP70. When phosphorylated at Ser-7, forms a complex with BRCA2, FANCD2 and XRCC3. In terms of tissue distribution, highly expressed in testis and thymus. Found in lymphoblasts.

It is found in the nucleus. Its subcellular location is the cytoplasm. DNA repair protein that may operate in a postreplication repair or a cell cycle checkpoint function. May be implicated in interstrand DNA cross-link repair and in the maintenance of normal chromosome stability. Candidate tumor suppressor gene. The polypeptide is Fanconi anemia group G protein (FANCG) (Homo sapiens (Human)).